Reading from the N-terminus, the 265-residue chain is Cell division protein DivIB (265 aa).

Over 1–33 (MRMELKMMGNVNKSNKTNEYILRRHKKKRKKKL) the chain is Cytoplasmic. The chain crosses the membrane as a helical span at residues 34–54 (IIFSILLISILVTLCFKHPFF). The POTRA domain maps to 54–122 (FNVKIVEVKD…NKIVIHIKER (69 aa)). Topologically, residues 55 to 265 (NVKIVEVKDN…FKGNPVVFIK (211 aa)) are extracellular.

This sequence belongs to the FtsQ/DivIB family. DivIB subfamily.

It localises to the cell membrane. Functionally, cell division protein that may be involved in stabilizing or promoting the assembly of the division complex. The sequence is that of Cell division protein DivIB from Clostridium tetani (strain Massachusetts / E88).